The chain runs to 285 residues: Urease accessory protein UreD (285 aa).

It belongs to the UreD family. As to quaternary structure, ureD, UreF and UreG form a complex that acts as a GTP-hydrolysis-dependent molecular chaperone, activating the urease apoprotein by helping to assemble the nickel containing metallocenter of UreC. The UreE protein probably delivers the nickel.

The protein resides in the cytoplasm. Its function is as follows. Required for maturation of urease via the functional incorporation of the urease nickel metallocenter. This Citrobacter koseri (strain ATCC BAA-895 / CDC 4225-83 / SGSC4696) protein is Urease accessory protein UreD.